Here is a 325-residue protein sequence, read N- to C-terminus: Glycine--tRNA ligase alpha subunit (325 aa).

Belongs to the class-II aminoacyl-tRNA synthetase family. Tetramer of two alpha and two beta subunits.

The protein localises to the cytoplasm. The enzyme catalyses tRNA(Gly) + glycine + ATP = glycyl-tRNA(Gly) + AMP + diphosphate. In Ralstonia nicotianae (strain ATCC BAA-1114 / GMI1000) (Ralstonia solanacearum), this protein is Glycine--tRNA ligase alpha subunit.